Here is a 518-residue protein sequence, read N- to C-terminus: MSPIALLSVSDKTGLIPLAKALVNDLGFKIISSGGTAKLIESENLPVTRVADYTGFPEILGGRVKTLNPKIHGGILARRDKQSHLDDLDKQNINPIDLVVVNLYPFVKTISKENVSWEEAIENIDIGGPTMIRAAAKNHQDVLVVTDPSQYSNLIDAYKSKKITTELRKKYSQQAFEHTATYDLTISNWIANQSSSKKVSWLQSLPLKQELRYGENPHQKASWYGEPEKGWSGANQLQGKELSTNNLLDLEAALSTLREFGYKNNISNPSYQKAAVVIKHTNPCGVAIGDSPSSALKRALDGDRVSAFGGIIAINCPVDEAAAKEIENIFIECVVAPYFDETAKEILSKKKNLRLLELKAESVQKADKNHIRSILGGLLIQDLDEPSIDQKKWKSVTELIPTDEEMNDLSFAWKIVKHIRSNAIAVASNQQSLGIGAGQMNRVGSAKLALEAAGTKSKGAVLASDGFFPFDDTVKMASDYGISSIIQPGGSIRDEDSIKACNELGIKMILTGKRHFLH.

In terms of domain architecture, MGS-like spans 1-146 (MSPIALLSVS…KNHQDVLVVT (146 aa)).

Belongs to the PurH family.

It catalyses the reaction (6R)-10-formyltetrahydrofolate + 5-amino-1-(5-phospho-beta-D-ribosyl)imidazole-4-carboxamide = 5-formamido-1-(5-phospho-D-ribosyl)imidazole-4-carboxamide + (6S)-5,6,7,8-tetrahydrofolate. The enzyme catalyses IMP + H2O = 5-formamido-1-(5-phospho-D-ribosyl)imidazole-4-carboxamide. It functions in the pathway purine metabolism; IMP biosynthesis via de novo pathway; 5-formamido-1-(5-phospho-D-ribosyl)imidazole-4-carboxamide from 5-amino-1-(5-phospho-D-ribosyl)imidazole-4-carboxamide (10-formyl THF route): step 1/1. Its pathway is purine metabolism; IMP biosynthesis via de novo pathway; IMP from 5-formamido-1-(5-phospho-D-ribosyl)imidazole-4-carboxamide: step 1/1. The polypeptide is Bifunctional purine biosynthesis protein PurH (Prochlorococcus marinus (strain NATL2A)).